The primary structure comprises 204 residues: E2 ubiquitin-conjugating enzyme PEX4 (204 aa).

The region spanning 2-196 (SAEKRLLQEY…IEYYVGRYSI (195 aa)) is the UBC core domain. Cysteine 133 functions as the Glycyl thioester intermediate in the catalytic mechanism.

It belongs to the ubiquitin-conjugating enzyme family.

The protein resides in the peroxisome membrane. The enzyme catalyses S-ubiquitinyl-[E1 ubiquitin-activating enzyme]-L-cysteine + [E2 ubiquitin-conjugating enzyme]-L-cysteine = [E1 ubiquitin-activating enzyme]-L-cysteine + S-ubiquitinyl-[E2 ubiquitin-conjugating enzyme]-L-cysteine.. The protein operates within protein modification; protein ubiquitination. E2 ubiquitin-conjugating enzyme involved in peroxisome biosynthesis. Acts late in peroxisomal matrix protein import, after matrix protein translocation. Required for both monoubiquitination and polyubiquitination of coreceptor PEX20. polyubiquitination of PEX20 at conserved lysine 'Lys-19' near the N-terminus leads to its and proteasomal degradation, whereas a monoubiquitination at the conserved cysteine 'Cys-8' is essential for its recycling. This Komagataella phaffii (strain GS115 / ATCC 20864) (Yeast) protein is E2 ubiquitin-conjugating enzyme PEX4.